Here is a 576-residue protein sequence, read N- to C-terminus: MSKRAKKRDKSTVEILQVYSASRDEEQMTDLKKTDYLPYLFNLVMPKQFYKSPNRIVMARLYPDVQKHDEQAAEYFEGFQTPCFDLPTKLFPEKTPIDKIVFMPKVMLPMGFEAGGVFGPGVLPRRCYPVDLISPDHKGPMPPLFVGLRGMKVSLSSMINTFLNMYDSPDGKEPHLYEMHATNHHYENDLAPEELMLRPDFTLSVAYTLPASMCLPSPYPYPSVPEQDNIYTPDLSKVLMLMPHQFNITVAILSTVNNPHDPSVAFATMGDDEECPKFELPNDVFPICEGVNRPIFLPKRFMPKGFDACCVFKPGSLSELWYIKRIGRFGTPQEQYNCSITPPLFVGKYTRNAASINMLEEISVHFDQKARECAKSLARLRLDALRLNSRNGSTKGFLVMESDKPTTPAGAYSVESYEEASEDGCVAKVTQECATESTDTRDDGINTADYQSQFPELEPDSEPEPEPEPQTEDEGEDEGDKKCLSCFKVDSDIDLISHAIAEMGVAELSMLGEVDPVPGVDTKLALDQLHEVFETRDEIRSNIDDLMRDHVCRMERDIMLALRQPIRKCSACAKHS.

Residues 454 to 481 (FPELEPDSEPEPEPEPQTEDEGEDEGDK) are disordered. The segment covering 457–478 (LEPDSEPEPEPEPQTEDEGEDE) has biased composition (acidic residues).

Belongs to the DM7 family.

The polypeptide is DM7 family protein GD16138 (Drosophila simulans (Fruit fly)).